Here is a 2049-residue protein sequence, read N- to C-terminus: Polyunsaturated fatty acid synthase subunit B (2049 aa).

Ketosynthase family 3 (KS3) domains lie at 15-442 (EKRI…VFEE) and 468-908 (NMRI…LLSD). Residues C196, H333, and H368 each act as for beta-ketoacyl synthase 1 activity in the active site. The segment at 467 to 984 (NNMRIAITGM…LGETLAQEAD (518 aa)) is chain length factor (CLF) domain. Positions 1044-1377 (RVAFMYGEGR…QRSHVTGAMD (334 aa)) are acyltransferase (AT) domain. Residues 1500–1531 (NKDNQPAVAPAATAAPTPKPKPAASSGKPVPS) are disordered. Positions 1505–1531 (PAVAPAATAAPTPKPKPAASSGKPVPS) are enriched in low complexity. The enoyl reductase (ER) domain stretch occupies residues 1579–1887 (SRAFMKTYGV…SRANKLYELF (309 aa)).

In terms of assembly, component of the polyunsaturated fatty acid synthase complex composed of at least ORF-A, ORF-B and ORF-C.

It participates in lipid metabolism; fatty acid biosynthesis. In terms of biological role, poliketide synthase-like protein; part of the polyunsaturated fatty acid synthase composed of the 3 PKS-like subunits A, B and C. While the saturated fatty acids (SFAs) in Thraustochytrium are produced by the conventional fatty acid synthase (FAS) pathway, polyunsaturated fatty acids (PUFAs) including docosahexeanoic acid (DHA) and docosapentaenoic acid (DPA) are synthesized via an anaerobical PKS pathway. PUFA synthase assimilates fatty acyl-CoA, the product of FAS, as the starter unit to synthesize DPA, and this starter unit may be butyryl-CoA, hexanoyl-CoA, or octanoyl-CoA. DPA and DHA biosynthesis seem to differ by the reduction at the N-3 position by PUFA synthase, not the extension of carbon chain. In DHA biosynthesis, PUFA synthase extends the fatty acyl chain from the methyl toward the carboxyl end, and the double bond is formed when the carbon chain is growing, instead of afterward. Therefore, PUFA synthase is unable to transform DPA to DHA, suggesting that DPA is not the precursor of DHA. Moreover, DPA molecule is partly extended by FAS KS domain, so DPA biosynthesis is less dependent on PUFA synthase KS domain than DHA. In Thraustochytrium sp. (strain ATCC 26185 / S-3), this protein is Polyunsaturated fatty acid synthase subunit B.